Reading from the N-terminus, the 383-residue chain is MQPADCPRGLLPRPCRVLVLLNPRGGKGKALKLFQSRVRPLLEEAEVSFKLMLTERQNHARELVCAEELGHWDALAVMSGDGLMHEVVNGLMERPDWESAIQKPLCSLPGGSGNALAASLNYYAGHEQVTNEDLLINCTLLLCCRQLSPMNLLSLHTASGRQLYSVLSLSWGFVADVDLESEKYRSLGEIRFTVGTFFRLASLRIYQGQLAYLPVGKAASKIPASSLAQKGPANTYLVPLEEPVPPHWTVVPEQDFVLVLVLLHTHLSTEMFAAPMGRCEAGVMHLFYIRAGVSRAMLVRLFLAMQKGKHMDLDCPYLVHVPVVAFRLEPRNQRGVFSVDGELMVCEAVQGQVHPNYLWMVSGSSDSPSGRDSQRRPPPEEPI.

The region spanning 12–159 (PRPCRVLVLL…MNLLSLHTAS (148 aa)) is the DAGKc domain. ATP-binding positions include 22–24 (NPR) and 54–58 (TERQN). Position 79–82 (79–82 (SGDG)) interacts with substrate. The Proton donor/acceptor role is filled by aspartate 81. ATP contacts are provided by residues glutamate 86 and 111-113 (GSG). Short sequence motifs (nuclear export signal) lie at residues 147–155 (LSPMNLLSL) and 161–169 (RQLYSVLSL). Aspartate 178 contacts substrate. ATP is bound by residues arginine 185 and arginine 191. Position 193 is a phosphothreonine (threonine 193). At serine 225 the chain carries Phosphoserine. 340-342 (DGE) serves as a coordination point for ATP. The tract at residues 363–383 (GSSDSPSGRDSQRRPPPEEPI) is disordered. Over residues 372–383 (DSQRRPPPEEPI) the composition is skewed to basic and acidic residues.

In terms of assembly, interacts with ACY1. Binds to calmodulin. Interacts with SPHKAP. Interacts with CIB1, the interaction occurs in a calcium-dependent manner. Interacts with TRAF2. Interacts with EEF1A1; the interaction enhances SPHK1 kinase activity. Mg(2+) serves as cofactor. Expressed in microglia (at protein level).

The protein localises to the cytoplasm. Its subcellular location is the nucleus. It is found in the cell membrane. The protein resides in the endosome membrane. It localises to the membrane. The protein localises to the clathrin-coated pit. Its subcellular location is the synapse. The enzyme catalyses a sphingoid base + ATP = a sphingoid 1-phosphate + ADP + H(+). It catalyses the reaction L-seryl-[protein] + acetyl-CoA = O-acetyl-L-seryl-[protein] + CoA. The catalysed reaction is sphinganine + ATP = sphinganine 1-phosphate + ADP + H(+). It carries out the reaction sphing-4-enine + ATP = sphing-4-enine 1-phosphate + ADP + H(+). The enzyme catalyses 1-O-hexadecyl-2-amino-sn-glycerol + ATP = 1-O-hexadecyl-2-desoxy-2-amino-sn-glycero-3-phosphate + ADP + H(+). Acetyltransferase activity increases in presence of the kinase substrate, sphingosine. In Purkinje cells, kinase activity on sphingosine increases in presence of VEGFA. In neurons, kinase activity increases during the first 24h in presence of Amyloid-beta protein 42 to decrease after 96h. Its function is as follows. Catalyzes the phosphorylation of sphingosine to form sphingosine 1-phosphate (SPP), a lipid mediator with both intra- and extracellular functions. Also acts on D-erythro-sphingosine and to a lesser extent sphinganine, but not other lipids, such as D,L-threo-dihydrosphingosine, N,N-dimethylsphingosine, diacylglycerol, ceramide, or phosphatidylinositol. In contrast to proapoptotic SPHK2, has a negative effect on intracellular ceramide levels, enhances cell growth and inhibits apoptosis. Involved in the regulation of inflammatory response and neuroinflammation. Via the product sphingosine 1-phosphate, stimulates TRAF2 E3 ubiquitin ligase activity, and promotes activation of NF-kappa-B in response to TNF signaling leading to IL17 secretion. In response to TNF and in parallel to NF-kappa-B activation, negatively regulates RANTES induction through p38 MAPK signaling pathway. Involved in endocytic membrane trafficking induced by sphingosine, recruited to dilate endosomes, also plays a role on later stages of endosomal maturation and membrane fusion independently of its kinase activity. In Purkinje cells, seems to be also involved in the regulation of autophagosome-lysosome fusion upon VEGFA. In terms of biological role, has serine acetyltransferase activity on PTGS2/COX2 in an acetyl-CoA dependent manner. The acetyltransferase activity increases in presence of the kinase substrate, sphingosine. During neuroinflammation, through PTGS2 acetylation, promotes neuronal secretion of specialized preresolving mediators (SPMs), especially 15-R-lipoxin A4, which results in an increase of phagocytic microglia. The chain is Sphingosine kinase 1 (Sphk1) from Rattus norvegicus (Rat).